The primary structure comprises 460 residues: GTPase Der (460 aa).

2 consecutive EngA-type G domains span residues 2–164 (KKVI…DDEI) and 199–370 (IKVG…ANFT). Residues 8-15 (GRPNVGKS), 55-59 (DSGGL), 116-119 (NKID), 205-212 (GRVNVGKS), 252-256 (DTAGI), and 316-319 (NKWD) each bind GTP. A KH-like domain is found at 371–454 (QKIATSKLND…PVILLPRKRG (84 aa)).

This sequence belongs to the TRAFAC class TrmE-Era-EngA-EngB-Septin-like GTPase superfamily. EngA (Der) GTPase family. In terms of assembly, associates with the 50S ribosomal subunit.

GTPase that plays an essential role in the late steps of ribosome biogenesis. In Campylobacter hominis (strain ATCC BAA-381 / DSM 21671 / CCUG 45161 / LMG 19568 / NCTC 13146 / CH001A), this protein is GTPase Der.